Here is a 57-residue protein sequence, read N- to C-terminus: Zinc finger protein MJ0458.1 (57 aa).

4 short sequence motifs (c(P)XCG motif) span residues 8–12 (CISCN), 26–30 (CPNCG), 37–41 (CERCR), and 49–53 (CPKCG). Zn(2+) is bound by residues Cys26 and Cys29. 2 residues coordinate Zn(2+): Cys49 and Cys52.

Monomer in solution.

Zinc-binding protein that binds only one zinc ion. In Methanocaldococcus jannaschii (strain ATCC 43067 / DSM 2661 / JAL-1 / JCM 10045 / NBRC 100440) (Methanococcus jannaschii), this protein is Zinc finger protein MJ0458.1.